Here is a 116-residue protein sequence, read N- to C-terminus: NADH-ubiquinone oxidoreductase chain 3 (116 aa).

3 helical membrane-spanning segments follow: residues 3–23, 56–76, and 85–105; these read LVISILAITIILSSILAVVSF, FFLVAILFLLFDLEIALLLAL, and ATGTFFWATAVLILLTLGLIY.

Belongs to the complex I subunit 3 family.

Its subcellular location is the mitochondrion membrane. It catalyses the reaction a ubiquinone + NADH + 5 H(+)(in) = a ubiquinol + NAD(+) + 4 H(+)(out). Core subunit of the mitochondrial membrane respiratory chain NADH dehydrogenase (Complex I) that is believed to belong to the minimal assembly required for catalysis. Complex I functions in the transfer of electrons from NADH to the respiratory chain. The immediate electron acceptor for the enzyme is believed to be ubiquinone. The chain is NADH-ubiquinone oxidoreductase chain 3 (MT-ND3) from Formosania lacustris (Oriental stream loach).